The chain runs to 333 residues: 4-hydroxyproline 2-epimerase (333 aa).

Catalysis depends on cysteine 90, which acts as the Proton acceptor. Substrate-binding positions include 91-92, histidine 223, and aspartate 249; that span reads GH. The active-site Proton donor is the cysteine 253. A substrate-binding site is contributed by 254-255; the sequence is GT.

It belongs to the proline racemase family.

The catalysed reaction is trans-4-hydroxy-L-proline = cis-4-hydroxy-D-proline. Functionally, catalyzes the epimerization of trans-4-hydroxy-L-proline (t4LHyp) to cis-4-hydroxy-D-proline (c4DHyp). Is likely involved in a degradation pathway that converts t4LHyp to alpha-ketoglutarate. Displays no proline racemase activity. In Shewanella loihica (strain ATCC BAA-1088 / PV-4), this protein is 4-hydroxyproline 2-epimerase.